Reading from the N-terminus, the 229-residue chain is Adenosylcobinamide-GDP ribazoletransferase (229 aa).

Helical transmembrane passes span 31–51 (AMLLAPLAALPLGLLVAAVLA), 55–75 (AVELPPLAVGLLAVGALAASS), 111–131 (AGVLATVVVAGVQAAALATLL), 134–154 (PLLAGALVCLSRCALWIVCCT), 176–196 (VAVLGGLLLSAVGGLVVLVLV), and 208–228 (GDVMGAAVELALAATLLAWAA).

Belongs to the CobS family. Mg(2+) serves as cofactor.

It is found in the cell membrane. It carries out the reaction alpha-ribazole + adenosylcob(III)inamide-GDP = adenosylcob(III)alamin + GMP + H(+). The enzyme catalyses alpha-ribazole 5'-phosphate + adenosylcob(III)inamide-GDP = adenosylcob(III)alamin 5'-phosphate + GMP + H(+). The protein operates within cofactor biosynthesis; adenosylcobalamin biosynthesis; adenosylcobalamin from cob(II)yrinate a,c-diamide: step 7/7. Joins adenosylcobinamide-GDP and alpha-ribazole to generate adenosylcobalamin (Ado-cobalamin). Also synthesizes adenosylcobalamin 5'-phosphate from adenosylcobinamide-GDP and alpha-ribazole 5'-phosphate. This is Adenosylcobinamide-GDP ribazoletransferase from Nocardioides sp. (strain ATCC BAA-499 / JS614).